Reading from the N-terminus, the 385-residue chain is ATP phosphoribosyltransferase regulatory subunit (385 aa).

This sequence belongs to the class-II aminoacyl-tRNA synthetase family. HisZ subfamily. As to quaternary structure, heteromultimer composed of HisG and HisZ subunits.

It is found in the cytoplasm. It functions in the pathway amino-acid biosynthesis; L-histidine biosynthesis; L-histidine from 5-phospho-alpha-D-ribose 1-diphosphate: step 1/9. Required for the first step of histidine biosynthesis. May allow the feedback regulation of ATP phosphoribosyltransferase activity by histidine. The chain is ATP phosphoribosyltransferase regulatory subunit from Bordetella avium (strain 197N).